The sequence spans 303 residues: Eukaryotic translation initiation factor 3 subunit G (303 aa).

Disordered regions lie at residues 1-32, 81-100, 105-126, and 181-215; these read MAAV…QTIV, GLSA…VGEN, PSAN…NAMK, and GAAG…AGGK. Over residues 109–126 the composition is skewed to basic and acidic residues; it reads WRKDQKDESKDANANAMK. Residues 223–301 enclose the RRM domain; that stretch reads ATLRVTNVSE…LILRVEFAKK (79 aa).

This sequence belongs to the eIF-3 subunit G family. As to quaternary structure, component of the eukaryotic translation initiation factor 3 (eIF-3) complex.

Its subcellular location is the cytoplasm. Its function is as follows. RNA-binding component of the eukaryotic translation initiation factor 3 (eIF-3) complex, which is involved in protein synthesis of a specialized repertoire of mRNAs and, together with other initiation factors, stimulates binding of mRNA and methionyl-tRNAi to the 40S ribosome. The eIF-3 complex specifically targets and initiates translation of a subset of mRNAs involved in cell proliferation. This subunit can bind 18S rRNA. The polypeptide is Eukaryotic translation initiation factor 3 subunit G (Pyricularia oryzae (strain 70-15 / ATCC MYA-4617 / FGSC 8958) (Rice blast fungus)).